A 1035-amino-acid chain; its full sequence is MKMMSVRCKLAQYLEDLEDVDLKKFKMHLEDYPPEKGCVPIPRGQMEKADHLDLATLMIDFNGEEKAWGMAVWIFAAINRRDLWEKAKKDQPEWNDACTSNLSMVCQEDSLEEEWIGLLGYLSRISICKKKKDYCKIYRRHVRSRFYSIKDRNARLGESVDLNRRYTQLQLVKEHPSKQEREHELLTIGRTKMWDRPMSSLKLELLFEPEDEHLEPVHTVVFQGAAGIGKTILARKIMLDWALGKLFKDKFDYLFFIHCREVSLRAPKSLADLIISCWPDPNPPVCKILCKPSRILFLMDGFDELQGAFDEHIEEVCTDWQKAVRGDILLSSLIRKKLLPKASLLITTRPVALEKLQHLLDHPRHVEILGFSEAKRKEYFFKYFSNELQAREAFRLIQENEILFTMCFIPLVCWIVCTGLKQQMETGKSLAQTSKTTTAVYVFFLSSLLQSRGGIEEHLFSAYLPGLCSLAADGIWNQKILFEECDLRKHGLQKTDVSAFLRMNVFQKEVDCERFYSFSHMTFQEFFAAMYYLLEEEEEGVTVRKGPEGCSDLLNRDVKVLLENYGKFEKGYLIFVVRFLFGLVNQERTSYLEKKLSCKISQQVRLELLKWIEVKAKAKKLQRQPSQLELFYCLYEMQEEDFVQSAMGHFPKIEINLSTRMDHVVSSFCIKNCHRVKTLSLGFLHNSPKEEEEEKRGSQPLDQVQCVFPDPHVACSSRLVNCCLTSSFCRGLFSSLSTNQSLTELDLSDNTLGDPGMRVLCEALQHPGCNIQRLWLGRCGLTHQCCFNISSVLSSSQKLVELDLSDNALGDFGVRLLCVGLKHLLCNLQKLWLVSCCLTSACCQDLALVLSSNHSLTRLYIGENALGDSGVQVLCEKMKDPQCNLQKLGLVNSGLTSLCCSALTSVLKTNQNLTHLYLRSNALGDMGLKLLCEGLLHPDCKLQMLELDNCSLTSHSCWDLSTILTHNQSLRKLNLSNNDLGDLCVVTLCEVLKQQGCLLQSLQLGEMYLNCETKRTLEALQEEKPELTVVFEISW.

The Pyrin domain occupies 1–93 (MKMMSVRCKL…WEKAKKDQPE (93 aa)). S5 bears the Phosphoserine mark. A disulfide bridge links C8 with C106. Y13 is subject to Phosphotyrosine. A lipid anchor (S-palmitoyl cysteine) is attached at C128. Residues 129–132 (KKKK) are required for binding to phosphatidylinositol 4-phosphate (PtdIns4P). 2 positions are modified to phosphotyrosine: Y134 and Y138. The region spanning 138 to 208 (YRRHVRSRFY…SSLKLELLFE (71 aa)) is the FISNA domain. The residue at position 159 (S159) is a Phosphoserine. Residue Y166 is modified to Phosphotyrosine. Position 167 (T167) interacts with ATP. A Phosphoserine modification is found at S199. The NACHT domain maps to 218-534 (HTVVFQGAAG…EFFAAMYYLL (317 aa)). ATP is bound at residue 224–231 (GAAGIGKT). Phosphoserine occurs at positions 263 and 293. A Glycyl lysine isopeptide (Lys-Gly) (interchain with G-Cter in ubiquitin) cross-link involves residue K322. Phosphoserine is present on S332. A KFERQ-like motif 1 motif is present at residues 353–357 (LEKLQ). Residue K428 forms a Glycyl lysine isopeptide (Lys-Gly) (interchain with G-Cter in ubiquitin) linkage. An ATP-binding site is contributed by H520. Positions 603 to 607 (QVRLE) match the KFERQ-like motif 2 motif. A Glycyl lysine isopeptide (Lys-Gly) (interchain with G-Cter in ubiquitin) cross-link involves residue K689. Residues S727 and S734 each carry the phosphoserine modification. 5 LRR repeats span residues 741–761 (SLTELDLSDNTLGDPGMRVLC), 770–791 (NIQRLWLGRCGLTHQCCFNISS), 798–818 (KLVELDLSDNALGDFGVRLLC), 827–848 (NLQKLWLVSCCLTSACCQDLAL), and 855–875 (SLTRLYIGENALGDSGVQVLC). Positions 797–801 (QKLVE) match the KFERQ-like motif 3 motif. S805 is modified (phosphoserine). Residues C836, C837, and C843 are each lipidated (S-palmitoyl cysteine). Y860 carries the post-translational modification Phosphotyrosine. K877 participates in a covalent cross-link: Glycyl lysine isopeptide (Lys-Gly) (interchain with G-Cter in ubiquitin). LRR repeat units lie at residues 884–905 (NLQKLGLVNSGLTSLCCSALTS), 912–932 (NLTHLYLRSNALGDMGLKLLC), 941–962 (KLQMLELDNCSLTSHSCWDLST), and 969–990 (SLRKLNLSNNDLGDLCVVTLCE). Residue C957 is the site of S-palmitoyl cysteine attachment. K972 participates in a covalent cross-link: Glycyl lysine isopeptide (Lys-Gly) (interchain with G-Cter in ubiquitin). The KFERQ-like motif 4 signature appears at 990 to 994 (EVLKQ). At S1034 the chain carries Phosphoserine.

The protein belongs to the NLRP family. Sensor component of NLRP3 inflammasomes; inflammasomes are supramolecular complexes that assemble in the cytosol in response to pathogens and other damage-associated signals and play critical roles in innate immunity and inflammation. The core of NLRP3 inflammasomes consists of a signal sensor component (NLRP3), an adapter (PYCARD/ASC), which recruits an effector pro-inflammatory caspase (CASP1 and, possibly, CASP4 and CASP5). Homodecamer; inactive NLRP3 forms homodecameric double-ring cages that hide pyrin domains within NACHT-LRR rings to avoid premature activation. Interacts (via pyrin domain) with PYCARD/ASC (via pyrin domain); interaction is direct. Interacts (via LRR repeat domain) with NEK7 (via N-terminus); the interaction is required for the formation of the complex NLRP3:PYCARD, oligomerization of PYCARD/ASC and activation of CASP1. Interacts (via LRR repeat domain) with NR4A1/Nur77 (via N-terminus); the interaction is direct, requires activation of NR4A1 by its ligands NBRE-containing dsDNA and lipopolysaccharide, and stimulates the association of NLRP3 with NEK7 for non-canonical NLRP3 inflammasome activation. Interacts with CARD8; leading to inhibit formation of the NLRP3 inflammasome. Interacts with MEFV; this interaction targets NLRP3 to degradation by autophagy, hence preventing excessive IL1B- and IL18-mediated inflammation. Interacts with EIF2AK2/PKR; this interaction requires EIF2AK2 activity, is accompanied by EIF2AK2 autophosphorylation and promotes inflammasome assembly in response to specific stimuli. Interacts with GBP5 (via DAPIN domain); this interaction promotes inflammasome assembly in response to microbial and soluble, but not crystalline, agents. Interacts with PML (isoform PML-1) (via the leucine-rich repeat (LRR) domain); PML-mediated increase in NLRP3 inflammasome activation does not depend upon this interaction. Interacts (via NACHT domain) with DHX33 (via DEAH box); NLRP3 activation in presence of cytosolic dsRNA is mediated by DHX33. Interacts (via NACHT and LRR domains) with ARRB2; this interaction is direct and inducible by polyunsaturated fatty acids (PUFAs). Interacts (via NACHT domain) with DDX3X under both LPS-primed and inflammasome-activating conditions. Interacts with IRF4 (via the LRR domain); this interaction is direct and is required for optimal IRF4 binding to IL4 promoter and efficient IL4 transactivation during differentiation of Th2 helper T-cells. Interacts with MAVS; promoting localization to mitochondria and activation of the NLRP3 inflammasome. Interacts with MARK4; promoting localization of NLRP3 to the microtubule organizing center (MTOC). Interacts with TRIM50; this interaction also promotes NLRP3 oligomerization and subsequent inflammasome activation. Interacts with IRGM; preventing NLRP3 inflammasome assembly and promoting NLRP3 degradation. Interacts (via NACHT and LLR domains) with ABHD8; this interaction is enhanced in the presence of NLRP3 inflammasome inducers, such as ATP, nigericin, silica, or alum. Interaction with ABHD8 leads the recruitment of ZDHHC12, hence facilitating NLRP3 palmitoylation and degradation by the chaperone-mediated autophagy pathway (CMA), therefore attenuating NLRP3 inflammasome activation. In terms of processing, phosphorylation by MAPK8/JNK1 increases inflammasome activation by promoting deubiquitination by BRCC3 and NLRP3 homooligomerization. Phosphorylation at Ser-805 by CSNK1A1 prevents inflammasome activation by preventing NEK7 recruitment. Phosphorylation at Ser-5 in the pyrin domain inhibits homomultimerization of NLRP3 and activation of the NLRP3 inflammasome: dephosphorylation by protein phosphatase 2A (PP2A) promotes assembly of the NLRP3 inflammasome. Phosphorylation at Ser-293 by PKD/PRKD1 promotes NLRP3 inflammasome assembly. Phosphorylation by ERK1/MAPK3 promotes NLRP3 inflammasome assembly. Phosphorylation by BTK (at Tyr-134, Tyr-138 and Tyr-166) in the region that mediates binding to phosphatidylinositol phosphate, promotes relocalization of NLRP3 and assembly of the NLRP3 inflammasome. Phosphorylation at Tyr-860 inhibits NLRP3 inflammasome assembly: dephosphorylation by PTPN22 promotes inflammasome activation. Phosphorylated by LATS1 and LATS2 at Ser-263 following palmitoylation by ZDHHC1, promoting its relocalization to the microtubule organizing center (MTOC), where NLRP3 is activated by NEK7, leading to inflammasome assembly and activation. Post-translationally, ubiquitinated; undergoes both 'Lys-48'- and 'Lys-63'-linked polyubiquitination. Ubiquitination does not lead to degradation, but inhibits inflammasome activation. Deubiquitination is catalyzed by BRCC3 and associated with NLRP3 activation and inflammasome assembly. This process can be induced by the activation of Toll-like receptors (by LPS), through a non-transcriptional pathway dependent on the mitochondrial production of reactive oxygen species, and by ATP. Ubiquitinated by TRIM31 via 'Lys-48'-linked ubiquitination, leading to its degradation by the proteasome. Ubiquitinated at Lys-689 by the SCF(FBXL2) complex, leading to its degradation by the proteasome. Ubiquitinated by TRIM35 via 'lys-48' and 'Lys-63'-linked ubiquitination leading to inhibition of NLRP3 inflammasome activation. Undergoes 'Lys-27'-linked polyubiquitination by MARCHF5, leading to NLRP3-NEK7 complex formation and NLRP3 oligomerization. The disulfide bond in the pyrin domain might play a role in reactive oxygen species-mediated activation. In terms of processing, palmitoylation by ZDHHC12 promotes NLRP3 degradation by the chaperone-mediated autophagy pathway (CMA) and therefore limits NLRP3 inflammasome activation. Interaction with ZDHHC12, and hence NLRP3 palmitoylation, is greatly enhanced by ABHD8. Following palmitoylation, HSPA8/HSC70 recognizes and binds the KFERQ-like motifs on NLRP3 and promotes NLRP3 recruitment to lysosomes, where it is degraded via the chaperone-mediated autophagy pathway in a LAMP2-dependent process. Palmitoylation at Cys-836 and Cys-837 by ZDHHC5 enhances its binding to NEK7 leading to inflammasome assembly and activation. Palmitoylation at Cys-128 and Cys-957 by ZDHHC1 facilitates phosphorylation at Ser-263 by LATS1 and LATS2, promoting its relocalization to the microtubule organizing center (MTOC), where NLRP3 is activated by NEK7, leading to inflammasome assembly and activation. Depalmitoylated by ABHD17A. Post-translationally, degraded via selective autophagy following interaction with IRGM. IRGM promotes NLRP3 recruitment to autophagosome membranes, promoting its SQSTM1/p62-dependent autophagy-dependent degradation.

The protein resides in the cytoplasm. Its subcellular location is the cytosol. It localises to the inflammasome. The protein localises to the cytoskeleton. It is found in the microtubule organizing center. The protein resides in the golgi apparatus membrane. Its subcellular location is the endoplasmic reticulum. It localises to the mitochondrion. The protein localises to the secreted. It is found in the nucleus. The enzyme catalyses ATP + H2O = ADP + phosphate + H(+). Its activity is regulated as follows. Under resting conditions, NLRP3 binds ADP and is autoinhibited. Inactive NLRP3 forms homodecameric double-ring cages that hide pyrin domains within NACHT-LRR rings to avoid premature activation. NLRP3 activation stimuli include extracellular ATP, nigericin, reactive oxygen species, crystals of monosodium urate or cholesterol, amyloid-beta fibers, environmental or industrial particles and nanoparticles, such as asbestos, silica, aluminum salts, cytosolic dsRNA, etc. Almost all stimuli trigger intracellular K(+) efflux. These stimuli lead to membrane perturbations that induce activation of NLRP3. Upon activation, NLRP3 is transported to microtubule organizing center (MTOC), where it is unlocked by NEK7, leading to its relocalization to dispersed trans-Golgi network (dTGN) vesicle membranes and recruitment of PYCARD/ASC for the formation of an active inflammasome complex. NEK7-activated NLRP3 forms a disk-shaped inflammasome. NLRP3 and PYCARD/ASC interact via their respective pyrin domains; interaction initiates speck formation (nucleation) which greatly enhances further addition of soluble PYCARD/ASC molecules to the speck in a prion-like polymerization process. Clustered PYCARD/ASC nucleates the formation of CASP1 filaments through the interaction of their respective CARD domains, acting as a platform for CASP1 polymerization and activation. Active CASP1 then processes IL1B and IL18 precursors, leading to the release of mature cytokines in the extracellular milieu and inflammatory response. NLRP3 inflammasome assembly is inhibited by IRGM, which impedes NLRP3 oligomerization. NLRP3 inflammasome is inhibited by cyclic AMP (cAMP), which directly binds NLRP3; inhibition is relieved by calcium-sensing receptor CASR, which inhibits production of cAMP. Specifically inhibited by sulfonylurea MCC950 (also named CP-456,773, CRID3), a potent and specific small-molecule inhibitor of the NLRP3 inflammasome that acts by preventing ATP hydrolysis. Its function is as follows. Sensor component of the NLRP3 inflammasome, which mediates inflammasome activation in response to defects in membrane integrity, leading to secretion of inflammatory cytokines IL1B and IL18 and pyroptosis. In response to pathogens and other damage-associated signals that affect the integrity of membranes, initiates the formation of the inflammasome polymeric complex composed of NLRP3, CASP1 and PYCARD/ASC. Recruitment of pro-caspase-1 (proCASP1) to the NLRP3 inflammasome promotes caspase-1 (CASP1) activation, which subsequently cleaves and activates inflammatory cytokines IL1B and IL18 and gasdermin-D (GSDMD), promoting cytokine secretion and pyroptosis. Activation of NLRP3 inflammasome is also required for HMGB1 secretion; stimulating inflammatory responses. Under resting conditions, ADP-bound NLRP3 is autoinhibited. NLRP3 activation stimuli include extracellular ATP, nigericin, reactive oxygen species, crystals of monosodium urate or cholesterol, amyloid-beta fibers, environmental or industrial particles and nanoparticles, such as asbestos, silica, aluminum salts, cytosolic dsRNA, etc. Almost all stimuli trigger intracellular K(+) efflux. These stimuli lead to membrane perturbation and activation of NLRP3. Upon activation, NLRP3 is transported to microtubule organizing center (MTOC), where it is unlocked by NEK7, leading to its relocalization to dispersed trans-Golgi network (dTGN) vesicle membranes and formation of an active inflammasome complex. Associates with dTGN vesicle membranes by binding to phosphatidylinositol 4-phosphate (PtdIns4P). Shows ATPase activity. In terms of biological role, independently of inflammasome activation, regulates the differentiation of T helper 2 (Th2) cells and has a role in Th2 cell-dependent asthma and tumor growth. During Th2 differentiation, required for optimal IRF4 binding to IL4 promoter and for IRF4-dependent IL4 transcription. Binds to the consensus DNA sequence 5'-GRRGGNRGAG-3'. May also participate in the transcription of IL5, IL13, GATA3, CCR3, CCR4 and MAF. The chain is NACHT, LRR and PYD domains-containing protein 3 from Rattus norvegicus (Rat).